Here is a 299-residue protein sequence, read N- to C-terminus: ATP phosphoribosyltransferase (299 aa).

This sequence belongs to the ATP phosphoribosyltransferase family. Long subfamily. Requires Mg(2+) as cofactor.

The protein resides in the cytoplasm. It carries out the reaction 1-(5-phospho-beta-D-ribosyl)-ATP + diphosphate = 5-phospho-alpha-D-ribose 1-diphosphate + ATP. It functions in the pathway amino-acid biosynthesis; L-histidine biosynthesis; L-histidine from 5-phospho-alpha-D-ribose 1-diphosphate: step 1/9. Its activity is regulated as follows. Feedback inhibited by histidine. Functionally, catalyzes the condensation of ATP and 5-phosphoribose 1-diphosphate to form N'-(5'-phosphoribosyl)-ATP (PR-ATP). Has a crucial role in the pathway because the rate of histidine biosynthesis seems to be controlled primarily by regulation of HisG enzymatic activity. The polypeptide is ATP phosphoribosyltransferase (Baumannia cicadellinicola subsp. Homalodisca coagulata).